A 469-amino-acid chain; its full sequence is 3-isopropylmalate dehydratase large subunit (469 aa).

The [4Fe-4S] cluster site is built by cysteine 349, cysteine 410, and cysteine 413.

It belongs to the aconitase/IPM isomerase family. LeuC type 1 subfamily. In terms of assembly, heterodimer of LeuC and LeuD. Requires [4Fe-4S] cluster as cofactor.

It carries out the reaction (2R,3S)-3-isopropylmalate = (2S)-2-isopropylmalate. The protein operates within amino-acid biosynthesis; L-leucine biosynthesis; L-leucine from 3-methyl-2-oxobutanoate: step 2/4. In terms of biological role, catalyzes the isomerization between 2-isopropylmalate and 3-isopropylmalate, via the formation of 2-isopropylmaleate. The sequence is that of 3-isopropylmalate dehydratase large subunit from Neisseria meningitidis serogroup C (strain 053442).